We begin with the raw amino-acid sequence, 293 residues long: 4-hydroxy-tetrahydrodipicolinate synthase (293 aa).

Residue Thr-45 coordinates pyruvate. Tyr-133 functions as the Proton donor/acceptor in the catalytic mechanism. Lys-161 functions as the Schiff-base intermediate with substrate in the catalytic mechanism. Ile-204 contributes to the pyruvate binding site.

It belongs to the DapA family. As to quaternary structure, homotetramer; dimer of dimers.

Its subcellular location is the cytoplasm. The enzyme catalyses L-aspartate 4-semialdehyde + pyruvate = (2S,4S)-4-hydroxy-2,3,4,5-tetrahydrodipicolinate + H2O + H(+). The protein operates within amino-acid biosynthesis; L-lysine biosynthesis via DAP pathway; (S)-tetrahydrodipicolinate from L-aspartate: step 3/4. Its function is as follows. Catalyzes the condensation of (S)-aspartate-beta-semialdehyde [(S)-ASA] and pyruvate to 4-hydroxy-tetrahydrodipicolinate (HTPA). The polypeptide is 4-hydroxy-tetrahydrodipicolinate synthase (Edwardsiella ictaluri (strain 93-146)).